The following is a 256-amino-acid chain: Pimeloyl-[acyl-carrier protein] methyl ester esterase (256 aa).

An AB hydrolase-1 domain is found at 15–242 (HLVLLHGWGL…AAHAPFISHP (228 aa)). Residues Trp-22, 82 to 83 (SL), and 143 to 147 (FLALQ) contribute to the substrate site. Catalysis depends on Ser-82, which acts as the Nucleophile. Active-site residues include Asp-207 and His-235. His-235 contributes to the substrate binding site.

The protein belongs to the AB hydrolase superfamily. Carboxylesterase BioH family. In terms of assembly, monomer.

Its subcellular location is the cytoplasm. It carries out the reaction 6-carboxyhexanoyl-[ACP] methyl ester + H2O = 6-carboxyhexanoyl-[ACP] + methanol + H(+). It participates in cofactor biosynthesis; biotin biosynthesis. Its function is as follows. The physiological role of BioH is to remove the methyl group introduced by BioC when the pimeloyl moiety is complete. It allows to synthesize pimeloyl-ACP via the fatty acid synthetic pathway through the hydrolysis of the ester bonds of pimeloyl-ACP esters. The polypeptide is Pimeloyl-[acyl-carrier protein] methyl ester esterase (Shigella boydii serotype 4 (strain Sb227)).